The primary structure comprises 721 residues: Polyribonucleotide nucleotidyltransferase (721 aa).

Mg(2+) is bound by residues Asp495 and Asp501. Residues 562-621 (PRLLSFRIDPELIGTVIGPGGRTIKGITERTNTKIDIEDSGIVTIASHDGAAADEAQKII) form the KH domain. One can recognise an S1 motif domain in the interval 631 to 699 (GEVFSGAITR…NRGRINLTLR (69 aa)). Positions 700–721 (GVPQNGEEAEPAPAPTPVAPLN) are disordered. Residues 711-721 (APAPTPVAPLN) are compositionally biased toward pro residues.

It belongs to the polyribonucleotide nucleotidyltransferase family. The cofactor is Mg(2+).

The protein resides in the cytoplasm. The enzyme catalyses RNA(n+1) + phosphate = RNA(n) + a ribonucleoside 5'-diphosphate. Functionally, involved in mRNA degradation. Catalyzes the phosphorolysis of single-stranded polyribonucleotides processively in the 3'- to 5'-direction. This is Polyribonucleotide nucleotidyltransferase from Synechococcus sp. (strain WH7803).